Reading from the N-terminus, the 606-residue chain is Endonuclease 8-like 3 (606 aa).

The active-site Schiff-base intermediate with DNA; via amino nitrogen is the Val-2. The tract at residues 31-51 (ALQGLGGPGSPPAAPGPMGTS) is disordered. DNA contacts are provided by Asn-194 and Arg-273. The segment at 249-283 (KVYKRPNCGQCCCKITVCRLGENNRMTYFCPHCQK) adopts an FPG-type zinc-finger fold. The RanBP2-type zinc-finger motif lies at 319 to 348 (SEEQWTCEVCTLINKLSSKTCDACLTSRPA). A Phosphoserine modification is found at Ser-451. Zn(2+) is bound by residues Cys-508, His-511, Cys-534, Cys-542, Cys-555, His-557, Cys-580, and Cys-588. 2 GRF-type zinc fingers span residues 508 to 551 (CSKH…ADLS) and 555 to 597 (CNHG…AQNG).

It belongs to the FPG family.

It is found in the nucleus. Its subcellular location is the chromosome. It carries out the reaction 2'-deoxyribonucleotide-(2'-deoxyribose 5'-phosphate)-2'-deoxyribonucleotide-DNA = a 3'-end 2'-deoxyribonucleotide-(2,3-dehydro-2,3-deoxyribose 5'-phosphate)-DNA + a 5'-end 5'-phospho-2'-deoxyribonucleoside-DNA + H(+). Functionally, DNA glycosylase which prefers single-stranded DNA (ssDNA), or partially ssDNA structures such as bubble and fork structures, to double-stranded DNA (dsDNA). Mediates interstrand cross-link repair in response to replication stress: acts by mediating DNA glycosylase activity, cleaving one of the two N-glycosyl bonds comprising the interstrand cross-link, which avoids the formation of a double-strand break but generates an abasic site that is bypassed by translesion synthesis polymerases. In vitro, displays strong glycosylase activity towards the hydantoin lesions spiroiminodihydantoin (Sp) and guanidinohydantoin (Gh) in both ssDNA and dsDNA; also recognizes FapyA, FapyG, 5-OHU, 5-OHC, 5-OHMH, Tg and 8-oxoA lesions in ssDNA. No activity on 8-oxoG detected. Also shows weak DNA-(apurinic or apyrimidinic site) lyase activity. In vivo, appears to be the primary enzyme involved in removing Sp and Gh from ssDNA in neonatal tissues. The protein is Endonuclease 8-like 3 (NEIL3) of Bos taurus (Bovine).